Here is a 148-residue protein sequence, read N- to C-terminus: Probable histone H2A.1 (148 aa).

A compositionally biased stretch (basic residues) spans 1 to 23 (MDASTKTKKGAGGRKGGPRKKSV). 2 disordered regions span residues 1 to 28 (MDAS…RSTR) and 127 to 148 (KNEK…PKKA). Over residues 131–142 (AATTTKSPSKAT) the composition is skewed to low complexity. 2 short sequence motifs (SPKK motif) span residues 137–140 (SPSK) and 144–147 (SPKK).

Belongs to the histone H2A family. As to quaternary structure, the nucleosome is a histone octamer containing two molecules each of H2A, H2B, H3 and H4 assembled in one H3-H4 heterotetramer and two H2A-H2B heterodimers. The octamer wraps approximately 147 bp of DNA.

It is found in the nucleus. The protein localises to the chromosome. In terms of biological role, core component of nucleosome. Nucleosomes wrap and compact DNA into chromatin, limiting DNA accessibility to the cellular machineries which require DNA as a template. Histones thereby play a central role in transcription regulation, DNA repair, DNA replication and chromosomal stability. DNA accessibility is regulated via a complex set of post-translational modifications of histones, also called histone code, and nucleosome remodeling. The protein is Probable histone H2A.1 of Medicago truncatula (Barrel medic).